The primary structure comprises 238 residues: MSQGAMRAVVPIIPFLLVLVGVSGVPTNVSSTTQPQLQTTGRPSHEAPNMTQTGTTDSPTAISLTTPDHTPPMPSIGLEEEEEEEGAGDGEHLEGGDGTRDTLPQSPGPAFPLAEDVEKDKPNRPVVPSPDPNNSPARPETSRPKTPPTIIGPLATRPTTRLTSKGRPLVPTPQHTPLFSFLTASPALDTLFVVSTVIHTLSFLCIGAMATHLCGGWSRRGRRTHPSVRYVCLPSERG.

The first 24 residues, 1-24 (MSQGAMRAVVPIIPFLLVLVGVSG), serve as a signal peptide directing secretion. Residues 25–189 (VPTNVSSTTQ…SFLTASPALD (165 aa)) lie on the Virion surface side of the membrane. Residues Asn28 and Asn49 are each glycosylated (N-linked (GlcNAc...) asparagine; by host). Composition is skewed to polar residues over residues 28 to 42 (NVSS…TTGR) and 49 to 68 (NMTQ…TTPD). Residues 28–171 (NVSSTTQPQL…LTSKGRPLVP (144 aa)) form a disordered region. A compositionally biased stretch (acidic residues) spans 78–88 (LEEEEEEEGAG). A compositionally biased stretch (basic and acidic residues) spans 89-100 (DGEHLEGGDGTR). The helical transmembrane segment at 190 to 210 (TLFVVSTVIHTLSFLCIGAMA) threads the bilayer. At 211–238 (THLCGGWSRRGRRTHPSVRYVCLPSERG) the chain is on the intravirion side.

It belongs to the alphaherpesvirinae glycoprotein G family.

The protein resides in the virion membrane. Functionally, chemokine-binding protein that inhibits neutrophils' chemotaxis. In Human herpesvirus 1 (strain 17) (HHV-1), this protein is Envelope glycoprotein G (gG).